The chain runs to 699 residues: Glutamine--fructose-6-phosphate aminotransferase [isomerizing] (699 aa).

Residue Cys2 is the Nucleophile of the active site. Residues 2–303 (CGIFGYANFS…DNDIVHISNG (302 aa)) form the Glutamine amidotransferase type-2 domain. 2 SIS domains span residues 377-516 (HVSG…QNLV) and 544-689 (SVKS…ADFP).

The catalysed reaction is D-fructose 6-phosphate + L-glutamine = D-glucosamine 6-phosphate + L-glutamate. It functions in the pathway nucleotide-sugar biosynthesis; UDP-N-acetyl-alpha-D-glucosamine biosynthesis; alpha-D-glucosamine 6-phosphate from D-fructose 6-phosphate: step 1/1. Involved in amino sugar synthesis (formation of chitin, supplies the amino sugars of asparagine-linked oligosaccharides of glycoproteins). The chain is Glutamine--fructose-6-phosphate aminotransferase [isomerizing] (GFA1) from Encephalitozoon cuniculi (strain GB-M1) (Microsporidian parasite).